Here is a 428-residue protein sequence, read N- to C-terminus: D-alanine--D-alanine ligase (428 aa).

The 220-residue stretch at 205-424 (KVVLDAAGIP…YTELITRLIE (220 aa)) folds into the ATP-grasp domain. 237–299 (DAGLTYPLFV…EQGIDGREIE (63 aa)) is an ATP binding site. Asp-378, Glu-391, and Asn-393 together coordinate Mg(2+).

This sequence belongs to the D-alanine--D-alanine ligase family. Mg(2+) serves as cofactor. The cofactor is Mn(2+).

The protein localises to the cytoplasm. It carries out the reaction 2 D-alanine + ATP = D-alanyl-D-alanine + ADP + phosphate + H(+). Its pathway is cell wall biogenesis; peptidoglycan biosynthesis. Functionally, cell wall formation. The chain is D-alanine--D-alanine ligase from Bifidobacterium longum (strain NCC 2705).